A 363-amino-acid chain; its full sequence is Aminomethyltransferase (363 aa).

Belongs to the GcvT family. In terms of assembly, the glycine cleavage system is composed of four proteins: P, T, L and H.

It carries out the reaction N(6)-[(R)-S(8)-aminomethyldihydrolipoyl]-L-lysyl-[protein] + (6S)-5,6,7,8-tetrahydrofolate = N(6)-[(R)-dihydrolipoyl]-L-lysyl-[protein] + (6R)-5,10-methylene-5,6,7,8-tetrahydrofolate + NH4(+). In terms of biological role, the glycine cleavage system catalyzes the degradation of glycine. In Teredinibacter turnerae (strain ATCC 39867 / T7901), this protein is Aminomethyltransferase.